The chain runs to 37 residues: Large ribosomal subunit protein bL36c (37 aa).

Belongs to the bacterial ribosomal protein bL36 family.

It localises to the plastid. Its subcellular location is the chloroplast. In Chaetosphaeridium globosum (Charophycean green alga), this protein is Large ribosomal subunit protein bL36c.